A 428-amino-acid chain; its full sequence is UPF0229 protein YeaH (428 aa).

Residues 77 to 90 are compositionally biased toward basic and acidic residues; it reads PGNDHFIQNDRIER. The interval 77–111 is disordered; that stretch reads PGNDHFIQNDRIERPQSGGGGGSGSGQGQASQDGE. Over residues 93 to 103 the composition is skewed to gly residues; that stretch reads SGGGGGSGSGQ.

The protein belongs to the UPF0229 family.

This Salmonella typhi protein is UPF0229 protein YeaH.